The chain runs to 267 residues: Malonyl-[acyl-carrier protein] O-methyltransferase (267 aa).

Belongs to the methyltransferase superfamily.

It carries out the reaction malonyl-[ACP] + S-adenosyl-L-methionine = malonyl-[ACP] methyl ester + S-adenosyl-L-homocysteine. It functions in the pathway cofactor biosynthesis; biotin biosynthesis. Converts the free carboxyl group of a malonyl-thioester to its methyl ester by transfer of a methyl group from S-adenosyl-L-methionine (SAM). It allows to synthesize pimeloyl-ACP via the fatty acid synthetic pathway. The chain is Malonyl-[acyl-carrier protein] O-methyltransferase from Geobacter sulfurreducens (strain ATCC 51573 / DSM 12127 / PCA).